The primary structure comprises 214 residues: Cytochrome b (214 aa).

The next 4 membrane-spanning stretches (helical) occupy residues 31-51 (FGSMLLTCLMIQIATGFFLAI), 75-96 (WIMQNTHAIGASLFFICIYIHI), 111-131 (WLSGTTLLIILMATAFFGYVL), and 176-196 (FFALHFILPFAIISMSSIHIL). His81 and His95 together coordinate heme b. Positions 180 and 194 each coordinate heme b. Position 199 (His199) interacts with a ubiquinone.

It belongs to the cytochrome b family. As to quaternary structure, the cytochrome bc1 complex contains 3 respiratory subunits (MT-CYB, CYC1 and UQCRFS1), 2 core proteins (UQCRC1 and UQCRC2) and probably 6 low-molecular weight proteins. The cofactor is heme b.

The protein resides in the mitochondrion inner membrane. Component of the ubiquinol-cytochrome c reductase complex (complex III or cytochrome b-c1 complex) that is part of the mitochondrial respiratory chain. The b-c1 complex mediates electron transfer from ubiquinol to cytochrome c. Contributes to the generation of a proton gradient across the mitochondrial membrane that is then used for ATP synthesis. In Agkistrodon contortrix contortrix (Southern copperhead), this protein is Cytochrome b (MT-CYB).